Consider the following 412-residue polypeptide: UPF0754 membrane protein Synpcc7942_1098 (412 aa).

2 consecutive transmembrane segments (helical) span residues 8-28 (LWLL…DLAI) and 390-410 (IGGV…VWSL).

It belongs to the UPF0754 family.

The protein localises to the cell inner membrane. In Synechococcus elongatus (strain ATCC 33912 / PCC 7942 / FACHB-805) (Anacystis nidulans R2), this protein is UPF0754 membrane protein Synpcc7942_1098.